A 510-amino-acid polypeptide reads, in one-letter code: Maturase K (510 aa).

Belongs to the intron maturase 2 family. MatK subfamily.

The protein localises to the plastid. Its subcellular location is the chloroplast. Its function is as follows. Usually encoded in the trnK tRNA gene intron. Probably assists in splicing its own and other chloroplast group II introns. This is Maturase K from Penstemon heterophyllus (Foothill penstemon).